Reading from the N-terminus, the 381-residue chain is Spermidine/putrescine import ATP-binding protein PotA (381 aa).

The ABC transporter domain maps to 22-252 (VELRNVFKFF…PKTSFVADFI (231 aa)). An ATP-binding site is contributed by 54–61 (GPSGCGKT).

This sequence belongs to the ABC transporter superfamily. Spermidine/putrescine importer (TC 3.A.1.11.1) family. As to quaternary structure, the complex is composed of two ATP-binding proteins (PotA), two transmembrane proteins (PotB and PotC) and a solute-binding protein (PotD).

It is found in the cell inner membrane. It carries out the reaction ATP + H2O + polyamine-[polyamine-binding protein]Side 1 = ADP + phosphate + polyamineSide 2 + [polyamine-binding protein]Side 1.. Part of the ABC transporter complex PotABCD involved in spermidine/putrescine import. Responsible for energy coupling to the transport system. In Trichormus variabilis (strain ATCC 29413 / PCC 7937) (Anabaena variabilis), this protein is Spermidine/putrescine import ATP-binding protein PotA.